The primary structure comprises 475 residues: Splicing factor U2AF 65 kDa subunit (475 aa).

The tract at residues 1–90 (MSDFDEFERQ…RHEKKKKVRK (90 aa)) is disordered. Residue Ser2 is modified to N-acetylserine. Phosphoserine is present on Ser2. A required for interaction with PRPF19 region spans residues 2 to 93 (SDFDEFERQL…KKKKVRKYWD (92 aa)). Positions 7 to 22 (FERQLNENKQERDKEN) are enriched in basic and acidic residues. Lys15 is subject to 5-hydroxylysine; by JMJD6; alternate. Lys15 is covalently cross-linked (Glycyl lysine isopeptide (Lys-Gly) (interchain with G-Cter in SUMO2); alternate). The tract at residues 17 to 47 (ERDKENRHRKRSHSRSRSRDRKRRSRSRDRR) is necessary and sufficient to stimulate pre-mRNAs 3'-end cleavage in a CFIm complex-dependent manner. A compositionally biased stretch (basic residues) spans 23 to 46 (RHRKRSHSRSRSRDRKRRSRSRDR). Over residues 47–56 (RNRDQRSASR) the composition is skewed to basic and acidic residues. A Glycyl lysine isopeptide (Lys-Gly) (interchain with G-Cter in SUMO2); alternate cross-link involves residue Lys70. Residue Lys70 is modified to N6-acetyllysine; alternate. Phosphoserine is present on Ser79. A compositionally biased stretch (basic residues) spans 79-89 (SPRHEKKKKVR). RRM domains follow at residues 149 to 231 (RRLY…RPHD), 259 to 337 (HKLF…RASV), and 385 to 466 (LPEE…YCDP). Lys276 carries the 5-hydroxylysine; by JMJD6 modification. Position 294 is a phosphoserine (Ser294).

It belongs to the splicing factor SR family. Interacts with U2AF1L4. Heterodimer with U2AF1. Binds unphosphorylated SF1. Interacts with SCAF11 and SNW1. Interacts with ZRSR2/U2AF1-RS2. Interacts with RBM17. Interacts with PRPF19; the interaction is direct. Interacts with POLR2A (via the C-terminal domain); recruits PRPF19 and the Prp19 complex to the pre-mRNA. Interacts with KHDC4 (Isoform 2). Interacts with ZRSR2. Interacts with the SF3B complex composed of SF3B1, SF3B2, SF3B3, SF3B4, SF3B5, SF3B6 and PHF5A. Interacts (via N-terminus) with CPSF7 (via C-terminus); this interaction stimulates pre-mRNA 3'-end processing by promoting the recruitment of the CFIm complex to cleavage and polyadenylation signals. Interacts with ARGLU1; interaction may be involved in ARGLU1-mediated modulation of alternative splicing. Lysyl-hydroxylation at Lys-15 and Lys-276 affects the mRNA splicing activity of the protein, leading to regulate some, but not all, alternative splicing events.

The protein localises to the nucleus. In terms of biological role, plays a role in pre-mRNA splicing and 3'-end processing. By recruiting PRPF19 and the PRP19C/Prp19 complex/NTC/Nineteen complex to the RNA polymerase II C-terminal domain (CTD), and thereby pre-mRNA, may couple transcription to splicing. Induces cardiac troponin-T (TNNT2) pre-mRNA exon inclusion in muscle. Regulates the TNNT2 exon 5 inclusion through competition with MBNL1. Binds preferentially to a single-stranded structure within the polypyrimidine tract of TNNT2 intron 4 during spliceosome assembly. Required for the export of mRNA out of the nucleus, even if the mRNA is encoded by an intron-less gene. Represses the splicing of MAPT/Tau exon 10. Positively regulates pre-mRNA 3'-end processing by recruiting the CFIm complex to cleavage and polyadenylation signals. The chain is Splicing factor U2AF 65 kDa subunit (U2AF2) from Homo sapiens (Human).